The chain runs to 56 residues: Large ribosomal subunit protein eL40 (56 aa).

The protein belongs to the eukaryotic ribosomal protein eL40 family.

The protein is Large ribosomal subunit protein eL40 of Metallosphaera sedula (strain ATCC 51363 / DSM 5348 / JCM 9185 / NBRC 15509 / TH2).